A 235-amino-acid polypeptide reads, in one-letter code: Ribosomal RNA small subunit methyltransferase G (235 aa).

S-adenosyl-L-methionine-binding positions include Gly74, Phe79, 97–99 (EAT), 125–126 (AE), and Arg144.

The protein belongs to the methyltransferase superfamily. RNA methyltransferase RsmG family.

It localises to the cytoplasm. Specifically methylates the N7 position of a guanine in 16S rRNA. The sequence is that of Ribosomal RNA small subunit methyltransferase G from Dehalococcoides mccartyi (strain ATCC BAA-2100 / JCM 16839 / KCTC 5957 / BAV1).